We begin with the raw amino-acid sequence, 214 residues long: uncharacterized protein (214 aa).

This is an uncharacterized protein from Sinorhizobium fredii (strain NBRC 101917 / NGR234).